The following is a 1410-amino-acid chain: non-specific serine/threonine protein kinase (1410 aa).

The 273-residue stretch at 27 to 299 folds into the Protein kinase domain; sequence THYVSQLNNS…LLEKYRTIYF (273 aa). ATP is bound by residues 33–41 and K54; that span reads LNNSRFLKT. The active-site Proton acceptor is the D147. HEAT repeat units lie at residues 441-478, 485-525, 556-594, 596-633, and 635-672; these read TKLDRTLPYLVAALEDDSTRVKVMAMNCVTTLIKEVKH, NIFV…KANL, RKLQQLFEDLTVSILTDPEISVKVALLKNILPLCKYFGR, KTNDVILSHLITYLNDRDPALRMYLVECISGIAILLGP, and TMEQYILPLIIQTITDEEELVVVSVLKNLKDLLKTRFV. WD repeat units follow at residues 1037-1076, 1187-1226, and 1230-1273; these read FDGTLLQSEVLLGTKSFMIYGSDQGALTVWDIDRLANEKS, ADYGCTISMVLDDKNNLLFFGTVSGIIEMWDARYFVQIRA, and GESL…CKHV.

It belongs to the protein kinase superfamily. Ser/Thr protein kinase family. Component of the autophagy-specific VPS34 PI3-kinase complex I composed of VPS15, VPS30, VPS34, ATG14 and ATG38; and of the VPS34 PI3-kinase complex II composed of VPS15, VPS30, VPS34 and VPS38. Post-translationally, autophosphorylated.

It localises to the golgi apparatus. The protein localises to the trans-Golgi network membrane. The protein resides in the endosome membrane. The catalysed reaction is L-seryl-[protein] + ATP = O-phospho-L-seryl-[protein] + ADP + H(+). It catalyses the reaction L-threonyl-[protein] + ATP = O-phospho-L-threonyl-[protein] + ADP + H(+). Serine/threonine-protein kinase that plays a role in signaling in modulation of host immune response, intracellular survival and virulence. Required for impediment of phagosomal maturation in THP-1 macrophages. Regulatory subunit of the autophagy-specific VPS34 PI3-kinase complex I essential to recruit the ATG8-phosphatidylinositol conjugate and the ATG12-ATG5 conjugate to the pre-autophagosomal structure. Within the PS34 PI3-kinase complex I, VPS15-mediated phosphorylation of VPS34 may be required for recruiting VPS34 to the membrane but not for activation of its PI3K activity. Is also involved in endosome-to-Golgi retrograde transport as part of the VPS34 PI3-kinase complex II. This second complex is required for the endosome-to-Golgi retrieval of PEP1 and KEX2, and the recruitment of VPS5 and VPS7, two components of the retromer complex, to endosomal membranes (probably through the synthesis of a specific pool of phosphatidylinositol 3-phosphate recruiting the retromer to the endosomes). By regulating VPS34 kinase activity, VPS15 appears to be essential for the efficient delivery of soluble hydrolases to the yeast vacuole. The chain is non-specific serine/threonine protein kinase from Candida glabrata (strain ATCC 2001 / BCRC 20586 / JCM 3761 / NBRC 0622 / NRRL Y-65 / CBS 138) (Yeast).